Consider the following 647-residue polypeptide: Nucleolar GTP-binding protein 1 (647 aa).

Positions 168–340 (RTLLICGYPN…VRNKACEKLL (173 aa)) constitute an OBG-type G domain. GTP-binding positions include 174–181 (GYPNVGKS), 220–224 (DTPGI), and 288–291 (NKTD). Ser-563 carries the post-translational modification Phosphoserine. A disordered region spans residues 594–647 (ADGSMRSKADRMAKMERRERNRHAKQGESDRHNAVSLSKHLFSGKRGVGKTDFR). Positions 598–626 (MRSKADRMAKMERRERNRHAKQGESDRHN) are enriched in basic and acidic residues.

The protein belongs to the TRAFAC class OBG-HflX-like GTPase superfamily. OBG GTPase family. NOG subfamily. As to quaternary structure, associated with nucleolar and cytoplasmic pre-60S particles. Directly interacts with RLP24.

It localises to the nucleus. The protein resides in the nucleolus. Functionally, involved in the biogenesis of the 60S ribosomal subunit. In Saccharomyces cerevisiae (strain ATCC 204508 / S288c) (Baker's yeast), this protein is Nucleolar GTP-binding protein 1 (NOG1).